The primary structure comprises 295 residues: Cyclin-G1 (295 aa).

Belongs to the cyclin family. Cyclin G subfamily.

Its subcellular location is the nucleus. Its function is as follows. May play a role in growth regulation. Is associated with G2/M phase arrest in response to DNA damage. May be an intermediate by which p53 mediates its role as an inhibitor of cellular proliferation. This is Cyclin-G1 (CCNG1) from Pongo abelii (Sumatran orangutan).